Reading from the N-terminus, the 530-residue chain is Plexin domain-containing protein 2 (530 aa).

The signal sequence occupies residues 1 to 30 (MARFRRADLAAAGVMLLCHFLTDRFQFAHG). The Extracellular portion of the chain corresponds to 31-455 (EPGHHTNDWI…AEKKGGTLHA (425 aa)). Residues Asn-103 and Asn-160 are each glycosylated (N-linked (GlcNAc...) asparagine). Residues 327–372 (TCLQFNGCGPCVSSQIGFNCSWCSKLQRCSSGFDRHRQDWVDSGCP) enclose the PSI domain. Positions 378 to 387 (KEKMCEKTEP) are enriched in basic and acidic residues. The disordered stretch occupies residues 378–399 (KEKMCEKTEPGETSQTTTTSHT). A compositionally biased stretch (low complexity) spans 390–399 (TSQTTTTSHT). A helical membrane pass occupies residues 456–476 (GLIVGILILVLIIAAAILVTV). The Cytoplasmic segment spans residues 477–530 (YMYHHPTSAASIFFIERRPSRWPAMKFRRGSGHPAYAEVEPVGEKEGFIVSEQC). Ser-507 carries the phosphoserine modification.

It belongs to the plexin family. Interacts with CTTN. As to expression, expressed in tumor endothelium and in vessels of some normal tissues, such as the muscle and lung.

It localises to the membrane. Functionally, may play a role in tumor angiogenesis. This chain is Plexin domain-containing protein 2 (Plxdc2), found in Mus musculus (Mouse).